A 199-amino-acid polypeptide reads, in one-letter code: uncharacterized protein (199 aa).

Residues 72–116 are a coiled coil; the sequence is EIYSEIENEESDIEEMSEEMKAFFAKTQEHRQKLKEQRAAEKRKE. Residues 98 to 117 are compositionally biased toward basic and acidic residues; it reads TQEHRQKLKEQRAAEKRKEG. The interval 98-127 is disordered; it reads TQEHRQKLKEQRAAEKRKEGQSSSKSQEEY.

This is an uncharacterized protein from Caenorhabditis elegans.